We begin with the raw amino-acid sequence, 412 residues long: tRNA (guanine-N(7)-)-methyltransferase non-catalytic subunit WDR4 (412 aa).

Ala2 is subject to N-acetylalanine. WD repeat units follow at residues 3 to 40 (GSVG…IYDC), 50 to 90 (NKGE…LFRT), 94 to 131 (QCLS…SFSV), 137 to 174 (CGRL…VSWA), 180 to 218 (IESF…LWEY), 230 to 273 (ASLQ…IFQL), and 319 to 373 (PVGD…SYLK). The disordered stretch occupies residues 377–412 (ERLQQQLEKKQRRRSPPPGPDGHAKKMRPGEATLSC). Ser391 and Ser411 each carry phosphoserine.

It belongs to the WD repeat TRM82 family. Non-catalytic component of the METTL1-WDR4 complex, composed of METTL1 and WDR4. Interacts with FEN1; the interaction is direct.

The protein localises to the nucleus. It is found in the chromosome. Its pathway is tRNA modification; N(7)-methylguanine-tRNA biosynthesis. Functionally, non-catalytic component of the METTL1-WDR4 methyltransferase complex required for the formation of N(7)-methylguanine in a subset of RNA species, such as tRNAs, mRNAs and microRNAs (miRNAs). In the METTL1-WDR4 methyltransferase complex, WDR4 acts as a scaffold for tRNA-binding. Required for the formation of N(7)-methylguanine at position 46 (m7G46) in a large subset of tRNAs that contain the 5'-RAGGU-3' motif within the variable loop. M7G46 interacts with C13-G22 in the D-loop to stabilize tRNA tertiary structure and protect tRNAs from decay. Also required for the formation of N(7)-methylguanine at internal sites in a subset of mRNAs. Also required for methylation of a specific subset of miRNAs, such as let-7. Independently of METTL1, also plays a role in genome stability: localizes at the DNA replication site and regulates endonucleolytic activities of FEN1. This is tRNA (guanine-N(7)-)-methyltransferase non-catalytic subunit WDR4 from Homo sapiens (Human).